Reading from the N-terminus, the 689-residue chain is Protein-glutamine gamma-glutamyltransferase 2 (689 aa).

Active-site residues include C278, H336, and D359. Residues N399, D401, E437, E447, and E452 each coordinate Ca(2+). A disordered region spans residues 427–453 (STKSVGRDSREDITHTYKYPEGSEKER). Residues 431-441 (VGRDSREDITH) show a composition bias toward basic and acidic residues. Residue 476–483 (RIKLSEGA) coordinates GTP. E539 serves as a coordination point for Ca(2+). GTP is bound at residue 580–583 (RDVY).

Belongs to the transglutaminase superfamily. Transglutaminase family. In terms of assembly, monomer. Ca(2+) serves as cofactor. In terms of tissue distribution, predominates in mature erythrocytes. Also found in kidney and cardiac muscle.

Its subcellular location is the cytoplasm. It localises to the cytosol. The protein resides in the nucleus. It is found in the chromosome. The protein localises to the secreted. Its subcellular location is the extracellular space. It localises to the extracellular matrix. The protein resides in the cell membrane. It is found in the mitochondrion. It carries out the reaction L-glutaminyl-[protein] + L-lysyl-[protein] = [protein]-L-lysyl-N(6)-5-L-glutamyl-[protein] + NH4(+). The enzyme catalyses L-glutaminyl-[protein] + serotonin = 5-serotonyl-L-glutamyl-[protein] + NH4(+). It catalyses the reaction L-glutaminyl-[protein] + dopamine = 5-dopaminyl-L-glutamyl-[protein] + NH4(+). The catalysed reaction is L-glutaminyl-[protein] + histamine = 5-histaminyl-L-glutamyl-[protein] + NH4(+). It carries out the reaction L-glutaminyl-[protein] + (R)-noradrenaline = 5-(R)-noradrenalinyl-L-glutamyl-[protein] + NH4(+). The enzyme catalyses L-glutaminyl-[protein] + H2O = L-glutamyl-[protein] + NH4(+). With respect to regulation, acyltransferase activity is regulated by the binding of GTP and Ca(2+): inactivated by GTP, which stabilizes its closed structure, thereby obstructing the accessibility of substrates to the active sites. In contrast, Ca(2+) acts as a cofactor by inducing conformational change to the active open form. In absence of Ca(2+), Mg(2+) may bind Ca(2+)-binding sites, promoting GTP-binding and subsequent inhibition of the acyltransferase activity. In terms of biological role, calcium-dependent acyltransferase that catalyzes the formation of covalent bonds between peptide-bound glutamine and various primary amines, such as gamma-amino group of peptide-bound lysine, or mono- and polyamines, thereby producing cross-linked or aminated proteins, respectively. Involved in many biological processes, such as bone development, angiogenesis, wound healing, cellular differentiation, chromatin modification and apoptosis. Acts as a protein-glutamine gamma-glutamyltransferase by mediating the cross-linking of proteins: under physiological conditions, the protein cross-linking activity is inhibited by GTP; inhibition is relieved by Ca(2+) in response to various stresses. When secreted, catalyzes cross-linking of proteins of the extracellular matrix, resulting in the formation of scaffolds. Plays a key role during apoptosis, both by (1) promoting the cross-linking of cytoskeletal proteins resulting in condensation of the cytoplasm, and by (2) mediating cross-linking proteins of the extracellular matrix, resulting in the irreversible formation of scaffolds that stabilize the integrity of the dying cells before their clearance by phagocytosis, thereby preventing the leakage of harmful intracellular components. In addition to protein cross-linking, can use different monoamine substrates to catalyze a vast array of protein post-translational modifications: mediates aminylation of serotonin, dopamine, noradrenaline or histamine into glutamine residues of target proteins to generate protein serotonylation, dopaminylation, noradrenalinylation or histaminylation, respectively. Mediates protein serotonylation of small GTPases during activation and aggregation of platelets, leading to constitutive activation of these GTPases. Plays a key role in chromatin organization by mediating serotonylation and dopaminylation of histone H3. Catalyzes serotonylation of 'Gln-5' of histone H3 (H3Q5ser) during serotonergic neuron differentiation, thereby facilitating transcription. Acts as a mediator of neurotransmission-independent role of nuclear dopamine in ventral tegmental area (VTA) neurons: catalyzes dopaminylation of 'Gln-5' of histone H3 (H3Q5dop), thereby regulating relapse-related transcriptional plasticity in the reward system. Also acts as a protein deamidase by mediating the side chain deamidation of specific glutamine residues of proteins to glutamate. May also act as an isopeptidase cleaving the previously formed cross-links. Also able to participate in signaling pathways independently of its acyltransferase activity: acts as a signal transducer in alpha-1 adrenergic receptor-mediated stimulation of phospholipase C-delta (PLCD) activity and is required for coupling alpha-1 adrenergic agonists to the stimulation of phosphoinositide lipid metabolism. This chain is Protein-glutamine gamma-glutamyltransferase 2, found in Gallus gallus (Chicken).